Consider the following 232-residue polypeptide: Phosphoglycolate phosphatase (232 aa).

The Nucleophile role is filled by D13. 3 residues coordinate Mg(2+): D13, D15, and D175.

The protein belongs to the HAD-like hydrolase superfamily. CbbY/CbbZ/Gph/YieH family. Monomer. It depends on Mg(2+) as a cofactor. Chloride is required as a cofactor.

The catalysed reaction is 2-phosphoglycolate + H2O = glycolate + phosphate. It functions in the pathway organic acid metabolism; glycolate biosynthesis; glycolate from 2-phosphoglycolate: step 1/1. In terms of biological role, specifically catalyzes the dephosphorylation of 2-phosphoglycolate. Is involved in the dissimilation of the intracellular 2-phosphoglycolate formed during the DNA repair of 3'-phosphoglycolate ends, a major class of DNA lesions induced by oxidative stress. The polypeptide is Phosphoglycolate phosphatase (Yersinia pseudotuberculosis serotype I (strain IP32953)).